The following is a 420-amino-acid chain: MDVDNGEGQVQVHLKTKQEHYAVPDVPYAIDGTVTTVELNTFVNALLRQKDGSSDTEFDFLVFDEYLRGRLCDHLREKAISFEDAIEIEYVERFPAPEPQDCLLHDDWVSAVKARGKWILSGCYDNSLNLWTNKGKHILTISGHTAPIKAVDWISLDEETGRFVSTSQDQTAMLWKWNVGSNAVDCVSVCKGHERGVDSVSVSPDGLRFATGSWDTMLKVWSAELDDGVEGSSKRMKESGVRTPKITLQGHRESVSAVQWMDATTLLTGSWDYTLKVWDLSLEGIKTEISTNKSIFDASYSKLNRLILTASADKNLRLYDPRTNQGSVVRNTYLGHNAWVQTVMWSTTEEFLFVSGAYDNQNKLWDCRSPKAPLYDLLGHGDKVLDIDWSNPKYIVSGGVDNSVRVFKSRKALAEDTETK.

Residues valine 10–glutamate 92 form a ubiquitin-like (UBL) domain region. WD repeat units follow at residues leucine 104 to serine 142, glycine 143 to aspartate 185, glycine 192 to glycine 231, glycine 250 to glutamate 288, serine 290 to valine 329, glycine 335 to tyrosine 375, and glycine 379 to threonine 417.

The protein belongs to the WD repeat WDR12/YTM1 family.

The protein localises to the nucleus. It is found in the nucleolus. Its subcellular location is the nucleoplasm. Functionally, required for maturation of ribosomal RNAs and formation of the large ribosomal subunit. This is Ribosome biogenesis protein WDR12 homolog from Drosophila simulans (Fruit fly).